A 371-amino-acid chain; its full sequence is Zinc transporter ZIP13 (371 aa).

Topologically, residues 1–7 are lumenal; the sequence is MPGCPCP. Residues 8–28 traverse the membrane as a helical segment; it reads GCGMAGPRLLFLTALALELLE. Residues 29–68 are Cytoplasmic-facing; that stretch reads RAGGSQPALRSRGTATACRLDNKESESWGALLSGERLDTW. Residues 69–89 form a helical membrane-spanning segment; sequence ICSLLGSLMVGLSGVFPLLVI. Residues 90–108 lie on the Lumenal side of the membrane; the sequence is PLEMGTMLRSEAGAWRLKQ. The helical transmembrane segment at 109–129 threads the bilayer; the sequence is LLSFALGGLLGNVFLHLLPEA. Residues 130–149 are Cytoplasmic-facing; the sequence is WAYTCSASPGGEGQSLQQQQ. Residues 150–170 form a helical membrane-spanning segment; the sequence is QLGLWVIAGILTFLALEKMFL. The Lumenal portion of the chain corresponds to 171 to 235; sequence DSKEEGTSQA…TIDNFTHGLA (65 aa). A helical membrane pass occupies residues 236 to 256; sequence VAASFLVSKKIGLLTTMAILL. Positions 257–262 match the XEXPHE-motif motif; the sequence is HEIPHE. Residues 257-278 are Cytoplasmic-facing; it reads HEIPHEVGDFAILLRAGFDRWS. The chain crosses the membrane as a helical span at residues 279-299; the sequence is AAKLQLSTALGGLLGAGFAIC. Residues 300–316 are Lumenal-facing; it reads TQSPKGVVGCSPAAEET. A helical transmembrane segment spans residues 317–337; that stretch reads AAWVLPFTSGGFLYIALVNVL. Topologically, residues 338–349 are cytoplasmic; that stretch reads PDLLEEEDPWRS. A helical transmembrane segment spans residues 350–370; sequence LQQLLLLCAGIVVMVLFSLFV. Position 371 (D371) is a topological domain, lumenal.

This sequence belongs to the ZIP transporter (TC 2.A.5) family. In terms of assembly, homodimer.

It is found in the golgi apparatus membrane. The protein resides in the cytoplasmic vesicle membrane. The protein localises to the endoplasmic reticulum membrane. It catalyses the reaction Zn(2+)(in) = Zn(2+)(out). Its function is as follows. Functions as a zinc transporter transporting Zn(2+) from the Golgi apparatus to the cytosol and thus influences the zinc level at least in areas of the cytosol. May regulate beige adipocyte differentiation. The sequence is that of Zinc transporter ZIP13 from Homo sapiens (Human).